Reading from the N-terminus, the 921-residue chain is Alanine--tRNA ligase (921 aa).

His602, His606, Cys706, and His710 together coordinate Zn(2+).

It belongs to the class-II aminoacyl-tRNA synthetase family. The cofactor is Zn(2+).

The protein localises to the cytoplasm. The enzyme catalyses tRNA(Ala) + L-alanine + ATP = L-alanyl-tRNA(Ala) + AMP + diphosphate. Its function is as follows. Catalyzes the attachment of alanine to tRNA(Ala) in a two-step reaction: alanine is first activated by ATP to form Ala-AMP and then transferred to the acceptor end of tRNA(Ala). Also edits incorrectly charged Ser-tRNA(Ala) and Gly-tRNA(Ala) via its editing domain. The protein is Alanine--tRNA ligase of Hyperthermus butylicus (strain DSM 5456 / JCM 9403 / PLM1-5).